A 697-amino-acid chain; its full sequence is Potassium-transporting ATPase ATP-binding subunit (697 aa).

The next 4 membrane-spanning stretches (helical) occupy residues 55–75, 79–99, 245–265, and 271–291; these read PIMF…FLPS, SIPG…VLFA, LTLI…YLGF, and VLVA…LSAI. The active-site 4-aspartylphosphate intermediate is D324. ATP contacts are provided by residues D361, E365, 393–400, and K412; that span reads FKAETRMS. Residues D535 and D539 each contribute to the Mg(2+) site. The next 3 membrane-spanning stretches (helical) occupy residues 605-625, 633-653, and 677-697; these read FAII…LNIM, AILS…PLAM, and GGVI…GLFI.

This sequence belongs to the cation transport ATPase (P-type) (TC 3.A.3) family. Type IA subfamily. In terms of assembly, the system is composed of three essential subunits: KdpA, KdpB and KdpC.

Its subcellular location is the cell membrane. The catalysed reaction is K(+)(out) + ATP + H2O = K(+)(in) + ADP + phosphate + H(+). In terms of biological role, part of the high-affinity ATP-driven potassium transport (or Kdp) system, which catalyzes the hydrolysis of ATP coupled with the electrogenic transport of potassium into the cytoplasm. This subunit is responsible for energy coupling to the transport system and for the release of the potassium ions to the cytoplasm. This Bacillus cereus (strain ATCC 14579 / DSM 31 / CCUG 7414 / JCM 2152 / NBRC 15305 / NCIMB 9373 / NCTC 2599 / NRRL B-3711) protein is Potassium-transporting ATPase ATP-binding subunit.